Consider the following 765-residue polypeptide: Zinc finger and BTB domain-containing protein 49 (765 aa).

The BTB domain occupies 25–91; that stretch reads CDCMLVVKGV…MYTSHLDLNQ (67 aa). 2 disordered regions span residues 165-203 and 275-294; these read QQNK…GSCT and NFLA…DATC. C2H2-type zinc fingers lie at residues 395–417, 423–445, 451–473, 479–501, 507–529, 535–557, and 563–585; these read YACE…KRSH, FECN…LRRH, YICE…IIIH, HLCD…KKTH, FTCD…RIRH, YSCS…VRTH, and YTCE…KKMH.

Belongs to the krueppel C2H2-type zinc-finger protein family. As to quaternary structure, isoform 1 interacts with EP300 and KAT5/Tip60. The interaction with EP300 is direct and leads to synergistic induction of CDKN1A. On the CDKN1A promoter, forms a complex with ZBTB17/Miz-1; this interaction leads to additive CDKN1A transactivation. Isoform 3 also interacts with ZBTB17; this interaction may block ZBTB17 repressor activity. In terms of tissue distribution, highly expressed in normal epidermis and in other epithelial tissues, including in colon and lung. Tends to be down-regulated in colon, lung and skin cancer tissues.

It localises to the cytoplasm. It is found in the nucleus. Its function is as follows. Transcription factor. Inhibits cell proliferation by activating either CDKN1A/p21 transcription or RB1 transcription. Binds CDKN1A promoter and activates its transcription; this activity is further potentiated in the presence of EP300 (synergistic) and ZBTB17/Miz-1 (additive). Functionally, activates RB1 transcription most probably by antagonizing ZBTB17 repression of RB1. Does not bind directly RB1 promoter. This chain is Zinc finger and BTB domain-containing protein 49 (ZBTB49), found in Homo sapiens (Human).